Here is a 192-residue protein sequence, read N- to C-terminus: Orotate phosphoribosyltransferase (192 aa).

116–124 (EDIVTTGLS) lines the 5-phospho-alpha-D-ribose 1-diphosphate pocket. Orotate-binding residues include T120 and R148.

Belongs to the purine/pyrimidine phosphoribosyltransferase family. PyrE subfamily. Homodimer. It depends on Mg(2+) as a cofactor.

It carries out the reaction orotidine 5'-phosphate + diphosphate = orotate + 5-phospho-alpha-D-ribose 1-diphosphate. It participates in pyrimidine metabolism; UMP biosynthesis via de novo pathway; UMP from orotate: step 1/2. Functionally, catalyzes the transfer of a ribosyl phosphate group from 5-phosphoribose 1-diphosphate to orotate, leading to the formation of orotidine monophosphate (OMP). The protein is Orotate phosphoribosyltransferase of Bartonella bacilliformis (strain ATCC 35685 / KC583 / Herrer 020/F12,63).